Consider the following 624-residue polypeptide: Chaperone protein HtpG (624 aa).

The tract at residues 1 to 336 is a; substrate-binding; sequence MSMKGQETRG…SNDLPLNVSR (336 aa). Positions 337–552 are b; that stretch reads EILQDSRVTQ…ADEMSTQMAK (216 aa). Residues 553–624 are c; the sequence is LFAAAGQQAP…IRRMNQLLTA (72 aa).

Belongs to the heat shock protein 90 family. As to quaternary structure, homodimer.

Its subcellular location is the cytoplasm. Functionally, molecular chaperone. Has ATPase activity. The protein is Chaperone protein HtpG of Yersinia enterocolitica serotype O:8 / biotype 1B (strain NCTC 13174 / 8081).